The following is a 992-amino-acid chain: Presequence protease, mitochondrial (992 aa).

Residues 1–30 constitute a mitochondrion transit peptide; that stretch reads MNYAKLSIAFSKKTIKTHNCRLFQRWLHVG. H91 is a Zn(2+) binding site. E94 functions as the Proton acceptor in the catalytic mechanism. Residue H95 coordinates Zn(2+). The active site involves E167. Residue E192 coordinates Zn(2+).

This sequence belongs to the peptidase M16 family. PreP subfamily. As to quaternary structure, monomer and homodimer; homodimerization is induced by binding of the substrate. It depends on Zn(2+) as a cofactor.

The protein localises to the mitochondrion intermembrane space. Its subcellular location is the mitochondrion matrix. In terms of biological role, degrades mitochondrial transit peptides after their cleavage in the intermembrane space or in the matrix, and presequence peptides; clearance of these peptides is required to keep the presequence processing machinery running. Preferentially cleaves the N-terminal side of paired basic amino acid residues. Also degrades other unstructured peptides. May function as an ATP-dependent peptidase as opposed to a metalloendopeptidase. This is Presequence protease, mitochondrial (cym1) from Schizosaccharomyces pombe (strain 972 / ATCC 24843) (Fission yeast).